The primary structure comprises 201 residues: Potassium-transporting ATPase KdpC subunit (201 aa).

The chain crosses the membrane as a helical span at residues 13–33 (IIFIIFTILCGGIYTIFITGI).

This sequence belongs to the KdpC family. The system is composed of three essential subunits: KdpA, KdpB and KdpC.

Its subcellular location is the cell membrane. Part of the high-affinity ATP-driven potassium transport (or Kdp) system, which catalyzes the hydrolysis of ATP coupled with the electrogenic transport of potassium into the cytoplasm. This subunit acts as a catalytic chaperone that increases the ATP-binding affinity of the ATP-hydrolyzing subunit KdpB by the formation of a transient KdpB/KdpC/ATP ternary complex. The sequence is that of Potassium-transporting ATPase KdpC subunit from Clostridium botulinum (strain Alaska E43 / Type E3).